We begin with the raw amino-acid sequence, 324 residues long: Biotin synthase (324 aa).

Residues 37 to 264 enclose the Radical SAM core domain; sequence NEVQVAALMN…ASYVRLAAGR (228 aa). [4Fe-4S] cluster contacts are provided by Cys52, Cys56, and Cys59. [2Fe-2S] cluster is bound by residues Cys96, Cys127, Cys187, and Arg259.

It belongs to the radical SAM superfamily. Biotin synthase family. In terms of assembly, homodimer. The cofactor is [4Fe-4S] cluster. Requires [2Fe-2S] cluster as cofactor.

The enzyme catalyses (4R,5S)-dethiobiotin + (sulfur carrier)-SH + 2 reduced [2Fe-2S]-[ferredoxin] + 2 S-adenosyl-L-methionine = (sulfur carrier)-H + biotin + 2 5'-deoxyadenosine + 2 L-methionine + 2 oxidized [2Fe-2S]-[ferredoxin]. It participates in cofactor biosynthesis; biotin biosynthesis; biotin from 7,8-diaminononanoate: step 2/2. Catalyzes the conversion of dethiobiotin (DTB) to biotin by the insertion of a sulfur atom into dethiobiotin via a radical-based mechanism. The polypeptide is Biotin synthase (Anaplasma marginale (strain Florida)).